Reading from the N-terminus, the 180-residue chain is Translation initiation factor IF-3 (180 aa).

Belongs to the IF-3 family. In terms of assembly, monomer.

The protein localises to the cytoplasm. IF-3 binds to the 30S ribosomal subunit and shifts the equilibrium between 70S ribosomes and their 50S and 30S subunits in favor of the free subunits, thus enhancing the availability of 30S subunits on which protein synthesis initiation begins. The chain is Translation initiation factor IF-3 from Shewanella baltica (strain OS223).